A 225-amino-acid chain; its full sequence is Uridylate kinase (225 aa).

Residue glycine 9–serine 10 participates in ATP binding. Glycine 46 lines the UMP pocket. The ATP site is built by glycine 47 and arginine 51. UMP contacts are provided by residues aspartate 67 and threonine 115–threonine 121. Residues threonine 141, asparagine 142, tyrosine 147, and aspartate 150 each contribute to the ATP site.

The protein belongs to the UMP kinase family. As to quaternary structure, homohexamer.

The protein localises to the cytoplasm. The catalysed reaction is UMP + ATP = UDP + ADP. It functions in the pathway pyrimidine metabolism; CTP biosynthesis via de novo pathway; UDP from UMP (UMPK route): step 1/1. With respect to regulation, inhibited by UTP. In terms of biological role, catalyzes the reversible phosphorylation of UMP to UDP. The polypeptide is Uridylate kinase (Methanococcus maripaludis (strain C6 / ATCC BAA-1332)).